Reading from the N-terminus, the 275-residue chain is 3-methyl-2-oxobutanoate hydroxymethyltransferase (275 aa).

Residues Asp49 and Asp88 each coordinate Mg(2+). 3-methyl-2-oxobutanoate-binding positions include 49–50, Asp88, and Lys118; that span reads DS. Glu120 contacts Mg(2+). The Proton acceptor role is filled by Glu187.

This sequence belongs to the PanB family. Homodecamer; pentamer of dimers. Mg(2+) is required as a cofactor.

The protein resides in the cytoplasm. It catalyses the reaction 3-methyl-2-oxobutanoate + (6R)-5,10-methylene-5,6,7,8-tetrahydrofolate + H2O = 2-dehydropantoate + (6S)-5,6,7,8-tetrahydrofolate. The protein operates within cofactor biosynthesis; (R)-pantothenate biosynthesis; (R)-pantoate from 3-methyl-2-oxobutanoate: step 1/2. Catalyzes the reversible reaction in which hydroxymethyl group from 5,10-methylenetetrahydrofolate is transferred onto alpha-ketoisovalerate to form ketopantoate. The sequence is that of 3-methyl-2-oxobutanoate hydroxymethyltransferase from Hyphomonas neptunium (strain ATCC 15444).